A 200-amino-acid chain; its full sequence is Serine/arginine-rich splicing factor RSZ22 (200 aa).

The 70-residue stretch at 2–71 folds into the RRM domain; it reads SRVYVGNLDP…NGWRVEQSHN (70 aa). A compositionally biased stretch (basic and acidic residues) spans 62–83; the sequence is NGWRVEQSHNRGERGGGGRGGD. Disordered regions lie at residues 62–97 and 112–200; these read NGWR…RGGS and RECR…RSRS. Residues 84-96 are compositionally biased toward gly residues; the sequence is RGGGGGGRGGRGG. The CCHC-type zinc-finger motif lies at 99 to 116; it reads LKCYECGETGHFARECRN. Residues 120-137 show a composition bias toward basic residues; the sequence is TGRRRSKSRSRTPPRYRR. 7 positions are modified to phosphoserine: Ser-138, Ser-147, Ser-152, Ser-160, Ser-162, Ser-174, and Ser-200. A compositionally biased stretch (low complexity) spans 138–150; it reads SPSYGRRSYSPRA. The segment covering 151 to 166 has biased composition (pro residues); the sequence is RSPPPPRRRSPSPPPA.

The protein belongs to the splicing factor SR family. RSZ subfamily. As to quaternary structure, component of the spliceosome. Interacts with AFC2, RS2Z33 and RNU1. In terms of processing, extensively phosphorylated on serine residues in the RS domain. Phosphorylated by AFC2. In terms of tissue distribution, expressed in primary and lateral roots, stems, petioles, abaxial and adaxial epidermis cells, trichomes, unopened flowers, anther filaments, anthers, stigma, pollen, pollen tube, ovule funiculi, integuments, embryo sac and developing seeds.

The protein localises to the nucleus speckle. It localises to the nucleus. Its subcellular location is the nucleolus. It is found in the nucleoplasm. The protein resides in the cytoplasm. Functionally, sequence-specific RNA-binding protein probably involved in pre-mRNA splicing. In vitro, can complement efficiently splicing-deficient mammalian SRSF7-depleted HeLa cell extract. In Arabidopsis thaliana (Mouse-ear cress), this protein is Serine/arginine-rich splicing factor RSZ22 (RSZ22).